The chain runs to 154 residues: Small heat shock protein IbpB (154 aa).

In terms of domain architecture, sHSP spans glycine 26–alanine 137.

This sequence belongs to the small heat shock protein (HSP20) family. As to quaternary structure, homodimer. Forms homomultimers of about 100-150 subunits at optimal growth temperatures. Conformation changes to oligomers at high temperatures or high ionic concentrations. The decrease in size of the multimers is accompanied by an increase in chaperone activity.

It is found in the cytoplasm. Functionally, associates with aggregated proteins, together with IbpA, to stabilize and protect them from irreversible denaturation and extensive proteolysis during heat shock and oxidative stress. Aggregated proteins bound to the IbpAB complex are more efficiently refolded and reactivated by the ATP-dependent chaperone systems ClpB and DnaK/DnaJ/GrpE. Its activity is ATP-independent. The chain is Small heat shock protein IbpB from Yersinia pseudotuberculosis serotype O:1b (strain IP 31758).